The sequence spans 359 residues: tRNA/tmRNA (uracil-C(5))-methyltransferase (359 aa).

Residues Gln183, Tyr211, Asn216, Glu232, and Asp292 each coordinate S-adenosyl-L-methionine. Cys317 acts as the Nucleophile in catalysis. Glu351 (proton acceptor) is an active-site residue.

It belongs to the class I-like SAM-binding methyltransferase superfamily. RNA M5U methyltransferase family. TrmA subfamily.

The catalysed reaction is uridine(54) in tRNA + S-adenosyl-L-methionine = 5-methyluridine(54) in tRNA + S-adenosyl-L-homocysteine + H(+). It carries out the reaction uridine(341) in tmRNA + S-adenosyl-L-methionine = 5-methyluridine(341) in tmRNA + S-adenosyl-L-homocysteine + H(+). Its function is as follows. Dual-specificity methyltransferase that catalyzes the formation of 5-methyluridine at position 54 (m5U54) in all tRNAs, and that of position 341 (m5U341) in tmRNA (transfer-mRNA). The sequence is that of tRNA/tmRNA (uracil-C(5))-methyltransferase from Pseudomonas fluorescens (strain SBW25).